The chain runs to 250 residues: Protein lin-28 homolog B (250 aa).

2 disordered regions span residues 1–27 (MAEAGASKGGEEPGRLPEHEEEEESPL) and 98–126 (RVTGPGGSPCLGSERRPKGKTVQKRKPKG). Residues 9–18 (GGEEPGRLPE) show a composition bias toward basic and acidic residues. In terms of domain architecture, CSD spans 29–102 (HGAGHCKWFN…GLESIRVTGP (74 aa)). Basic residues predominate over residues 114–125 (PKGKTVQKRKPK). 2 consecutive CCHC-type zinc fingers follow at residues 127 to 144 (DRCYNCGGLDHHAKECSL) and 149 to 166 (KKCHYCQSIMHMVANCPH). Cys129, Cys132, His137, Cys142, Cys151, Cys154, His159, and Cys164 together coordinate Zn(2+). The interval 165 to 250 (PHKTVSQQPT…GPSVQKRKKT (86 aa)) is disordered. The span at 168-177 (TVSQQPTSSQ) shows a compositional bias: polar residues. Residues 200-209 (GYSSPSYSQE) show a composition bias toward low complexity. Residues 210 to 219 (GRSEISERSG) show a composition bias toward basic and acidic residues.

The protein belongs to the lin-28 family.

The protein resides in the nucleus. It localises to the nucleolus. Suppressor of specific microRNA (miRNA) biogenesis. Binds target primary miRNA transcripts and sequester them in the nucleolus, away from the microprocessor complex, hence preventing their processing into mature miRNA. The specific interaction with target pri-miRNAs occurs via an 5'-GGAG-3' motif in the pre-miRNA terminal loop. This Gallus gallus (Chicken) protein is Protein lin-28 homolog B (LIN28B).